A 128-amino-acid polypeptide reads, in one-letter code: uncharacterized protein (128 aa).

A run of 4 helical transmembrane segments spans residues 5 to 25, 27 to 47, 60 to 80, and 87 to 107; these read ILALLIWSSSLIVGKLTYSMM, PVLVVQVRLIIAMIIVMPLFL, QLWWLAFFNYTAVFLLQFIGL, and SAVTMIGLEPLLVVFVGHFFF. The 102-residue stretch at 9–110 folds into the EamA domain; it reads LIWSSSLIVG…FVGHFFFKTK (102 aa).

It is found in the cell membrane. This is an uncharacterized protein from Haemophilus influenzae (strain ATCC 51907 / DSM 11121 / KW20 / Rd).